The sequence spans 308 residues: D-alanine--D-alanine ligase (308 aa).

The ATP-grasp domain occupies 106-305 (KMLWKAFGLP…FEQLVVKILE (200 aa)). 136–191 (VEKLGLPLMVKPSLEGSSVGLTKVNAIDDLKSAVEFALQYDETVLIEEWLSGDELT) contacts ATP. Mg(2+) contacts are provided by D259, E272, and N274.

This sequence belongs to the D-alanine--D-alanine ligase family. The cofactor is Mg(2+). It depends on Mn(2+) as a cofactor.

Its subcellular location is the cytoplasm. The catalysed reaction is 2 D-alanine + ATP = D-alanyl-D-alanine + ADP + phosphate + H(+). Its pathway is cell wall biogenesis; peptidoglycan biosynthesis. Its function is as follows. Cell wall formation. The protein is D-alanine--D-alanine ligase of Histophilus somni (strain 2336) (Haemophilus somnus).